The sequence spans 109 residues: Iron-sulfur cluster assembly protein CyaY (109 aa).

The protein belongs to the frataxin family.

Involved in iron-sulfur (Fe-S) cluster assembly. May act as a regulator of Fe-S biogenesis. The polypeptide is Iron-sulfur cluster assembly protein CyaY (Verminephrobacter eiseniae (strain EF01-2)).